The following is a 270-amino-acid chain: uncharacterized protein (270 aa).

A signal peptide spans 1 to 22 (MEYIKKLLCTMSVLLLIIFIGG). Cysteine 23 carries N-palmitoyl cysteine lipidation. A lipid anchor (S-diacylglycerol cysteine) is attached at cysteine 23.

It belongs to the staphylococcal tandem lipoprotein family.

The protein localises to the cell membrane. This is an uncharacterized protein from Staphylococcus aureus (strain bovine RF122 / ET3-1).